The primary structure comprises 185 residues: ATP synthase subunit delta (185 aa).

The protein belongs to the ATPase delta chain family. In terms of assembly, F-type ATPases have 2 components, F(1) - the catalytic core - and F(0) - the membrane proton channel. F(1) has five subunits: alpha(3), beta(3), gamma(1), delta(1), epsilon(1). F(0) has three main subunits: a(1), b(2) and c(10-14). The alpha and beta chains form an alternating ring which encloses part of the gamma chain. F(1) is attached to F(0) by a central stalk formed by the gamma and epsilon chains, while a peripheral stalk is formed by the delta and b chains.

The protein resides in the cell inner membrane. Functionally, f(1)F(0) ATP synthase produces ATP from ADP in the presence of a proton or sodium gradient. F-type ATPases consist of two structural domains, F(1) containing the extramembraneous catalytic core and F(0) containing the membrane proton channel, linked together by a central stalk and a peripheral stalk. During catalysis, ATP synthesis in the catalytic domain of F(1) is coupled via a rotary mechanism of the central stalk subunits to proton translocation. In terms of biological role, this protein is part of the stalk that links CF(0) to CF(1). It either transmits conformational changes from CF(0) to CF(1) or is implicated in proton conduction. This Ehrlichia chaffeensis (strain ATCC CRL-10679 / Arkansas) protein is ATP synthase subunit delta.